The primary structure comprises 385 residues: S-adenosylmethionine synthase (385 aa).

His-14 is a binding site for ATP. Asp-16 contacts Mg(2+). Residue Glu-42 participates in K(+) binding. Positions 55 and 98 each coordinate L-methionine. A flexible loop region spans residues 98-108; sequence QSGDIAQAVDN. ATP is bound by residues 165 to 167, 232 to 233, Asp-241, 247 to 248, Ala-264, and Lys-268; these read DAK, RF, and RK. An L-methionine-binding site is contributed by Asp-241. Lys-272 contacts L-methionine.

Belongs to the AdoMet synthase family. As to quaternary structure, homotetramer; dimer of dimers. Mg(2+) is required as a cofactor. Requires K(+) as cofactor.

Its subcellular location is the cytoplasm. The catalysed reaction is L-methionine + ATP + H2O = S-adenosyl-L-methionine + phosphate + diphosphate. It functions in the pathway amino-acid biosynthesis; S-adenosyl-L-methionine biosynthesis; S-adenosyl-L-methionine from L-methionine: step 1/1. Its function is as follows. Catalyzes the formation of S-adenosylmethionine (AdoMet) from methionine and ATP. The overall synthetic reaction is composed of two sequential steps, AdoMet formation and the subsequent tripolyphosphate hydrolysis which occurs prior to release of AdoMet from the enzyme. The sequence is that of S-adenosylmethionine synthase from Leuconostoc mesenteroides subsp. mesenteroides (strain ATCC 8293 / DSM 20343 / BCRC 11652 / CCM 1803 / JCM 6124 / NCDO 523 / NBRC 100496 / NCIMB 8023 / NCTC 12954 / NRRL B-1118 / 37Y).